Consider the following 37-residue polypeptide: MKVRASVKKICRNCKVIKRNGVVRIICIEPKHKQRQG.

Belongs to the bacterial ribosomal protein bL36 family.

The sequence is that of Large ribosomal subunit protein bL36 from Photobacterium profundum (strain SS9).